The chain runs to 539 residues: MEDSLFSVDKAGPGKDASAASADCNHMVAEDGIITEQHKEIPLVALKVPDGHAPIDECELLNSDDQLPKGSQNQTNICMRIRAFACPPQGCFSLAITNVTMVILIWAVVWSITGPECLPGGNLFGILALLFSAALGGKLISLIKIPSLPPLPPLLGMLLAGFLIRNIPVITDQVQIHHKWSAALRNIALAIILVRAGLGLDPKALRKLKAVCLRLSFGPCVVESCTAAVVSHFIMGFPLTWGFMLGFVLGAVSPAVVVPSMLILQKEGFGVDKGIPTLLMAAGSFDDVLAITGFNTCLGMAFSSGSTLNTIVRGVLEVVVGIAAGLLFGFFLHYFPSKDQENLKGKRSYLILALSVFAVFGSLYFGFPGSGGLCTLVMAFLAGIGWSTDKTVVEDIIAVSWDIFQPLLFGLIGAEISVASLKPETVGLCTATLIIALIIRICISFLMVCFSGFSLKEKIFISLAWMPKATVQAAIGSVALDTARTLENKQFEDYGMDVLTVAFLGILVTAPIGALVIGLTGPKMLEKSESRTVTEEGSV.

Over M1–L94 the chain is Cytoplasmic. The helical transmembrane segment at A95 to I112 threads the bilayer. Over T113–G121 the chain is Extracellular. Residues N122 to S141 traverse the membrane as a helical segment. The Cytoplasmic segment spans residues L142 to P152. The helical transmembrane segment at P153–V169 threads the bilayer. The Extracellular segment spans residues I170–K179. The chain crosses the membrane as a helical span at residues W180–G197. The Cytoplasmic segment spans residues L198–L208. A helical membrane pass occupies residues K209–M235. Over G236 to W241 the chain is Extracellular. The helical transmembrane segment at G242–G250 threads the bilayer. Topologically, residues A251–L278 are cytoplasmic. V252, G283, D286, and D287 together coordinate Na(+). The helical transmembrane segment at L279–L298 threads the bilayer. The Extracellular segment spans residues G299–L308. Residues N309–L332 form a helical membrane-spanning segment. The Cytoplasmic portion of the chain corresponds to H333–R347. A helical transmembrane segment spans residues S348 to F365. At G366–G369 the chain is on the extracellular side. Residues S370–L381 form a helical membrane-spanning segment. Residues A382–A398 lie on the Cytoplasmic side of the membrane. Residues V399–A419 traverse the membrane as a helical segment. Over S420–T425 the chain is Extracellular. A helical membrane pass occupies residues V426 to V448. Over C449–A469 the chain is Cytoplasmic. The helical transmembrane segment at T470–D481 threads the bilayer. Over T482–Y494 the chain is Extracellular. Residues G495 to I517 form a helical membrane-spanning segment. Residues G518–V539 lie on the Cytoplasmic side of the membrane.

The protein belongs to the monovalent cation:proton antiporter 1 (CPA1) transporter (TC 2.A.36) family. In terms of assembly, homodimer; dimerization is essential for SLC9B2 activity. Lipids seem to play a role in the stabilization of the dimerization subdomain.

The protein localises to the cell membrane. It localises to the mitochondrion membrane. Its subcellular location is the endosome membrane. It is found in the recycling endosome membrane. The protein resides in the cytoplasmic vesicle. The protein localises to the secretory vesicle. It localises to the synaptic vesicle membrane. Its subcellular location is the basolateral cell membrane. It is found in the apical cell membrane. The catalysed reaction is Li(+)(out) + H(+)(in) = Li(+)(in) + H(+)(out). It carries out the reaction Li(+)(in) + Na(+)(out) = Li(+)(out) + Na(+)(in). It catalyses the reaction Na(+)(in) + H(+)(out) = Na(+)(out) + H(+)(in). Its activity is regulated as follows. Allosterically inhibited by the N-terminal domain. Inhibited by phloretin. Its function is as follows. Electroneutral Na(+) Li(+)/H(+) antiporter that extrudes Na(+) or Li(+) in exchange for external protons across the membrane. Uses the proton gradient/membrane potential to extrude sodium. Contributes to the regulation of intracellular pH and sodium homeostasis. Also able to mediate Na(+)/Li(+) antiporter activity in kidney. The polypeptide is Sodium/hydrogen exchanger 9B2 (slc9b2) (Xenopus tropicalis (Western clawed frog)).